Reading from the N-terminus, the 106-residue chain is MSNLIPGEIIPEQGEIELNLGKEVKTVKVSNSGDRPVQIGSHYHFFEANKALIFDRELTLGMRLDIPAGTAIRFEPGDTTDVKLVPYKGLRIAYGFNSLVNGSLDT.

The protein belongs to the urease beta subunit family. In terms of assembly, heterotrimer of UreA (gamma), UreB (beta) and UreC (alpha) subunits. Three heterotrimers associate to form the active enzyme.

Its subcellular location is the cytoplasm. The catalysed reaction is urea + 2 H2O + H(+) = hydrogencarbonate + 2 NH4(+). Its pathway is nitrogen metabolism; urea degradation; CO(2) and NH(3) from urea (urease route): step 1/1. This is Urease subunit beta from Prochlorococcus marinus (strain MIT 9301).